The chain runs to 92 residues: Elongation factor 1-beta (92 aa).

It belongs to the EF-1-beta/EF-1-delta family.

Promotes the exchange of GDP for GTP in EF-1-alpha/GDP, thus allowing the regeneration of EF-1-alpha/GTP that could then be used to form the ternary complex EF-1-alpha/GTP/AAtRNA. In Pyrobaculum arsenaticum (strain DSM 13514 / JCM 11321 / PZ6), this protein is Elongation factor 1-beta.